Consider the following 178-residue polypeptide: Bifunctional protein PyrR (178 aa).

The PRPP-binding motif lies at 99-111 (IILVDDVLFTGRT).

Belongs to the purine/pyrimidine phosphoribosyltransferase family. PyrR subfamily. Homodimer and homohexamer; in equilibrium.

The catalysed reaction is UMP + diphosphate = 5-phospho-alpha-D-ribose 1-diphosphate + uracil. Regulates transcriptional attenuation of the pyrimidine nucleotide (pyr) operon by binding in a uridine-dependent manner to specific sites on pyr mRNA. This disrupts an antiterminator hairpin in the RNA and favors formation of a downstream transcription terminator, leading to a reduced expression of downstream genes. In terms of biological role, also displays a weak uracil phosphoribosyltransferase activity which is not physiologically significant. The protein is Bifunctional protein PyrR of Clostridium novyi (strain NT).